The primary structure comprises 200 residues: Probable GTP-binding protein EngB (200 aa).

One can recognise an EngB-type G domain in the interval 26 to 200; the sequence is SIPEVALAGR…IYEIAQCIKK (175 aa). Residues 34-41, 61-65, 80-83, 147-150, and 179-181 each bind GTP; these read GRSNVGKS, GCTRQ, DLPG, TKID, and VSS. Positions 41 and 63 each coordinate Mg(2+).

Belongs to the TRAFAC class TrmE-Era-EngA-EngB-Septin-like GTPase superfamily. EngB GTPase family. Mg(2+) serves as cofactor.

In terms of biological role, necessary for normal cell division and for the maintenance of normal septation. This chain is Probable GTP-binding protein EngB, found in Ehrlichia ruminantium (strain Welgevonden).